The sequence spans 148 residues: SsrA-binding protein (148 aa).

The segment at 129 to 148 (ETEKDRDWQREKARLMREKA) is disordered.

This sequence belongs to the SmpB family.

Its subcellular location is the cytoplasm. Required for rescue of stalled ribosomes mediated by trans-translation. Binds to transfer-messenger RNA (tmRNA), required for stable association of tmRNA with ribosomes. tmRNA and SmpB together mimic tRNA shape, replacing the anticodon stem-loop with SmpB. tmRNA is encoded by the ssrA gene; the 2 termini fold to resemble tRNA(Ala) and it encodes a 'tag peptide', a short internal open reading frame. During trans-translation Ala-aminoacylated tmRNA acts like a tRNA, entering the A-site of stalled ribosomes, displacing the stalled mRNA. The ribosome then switches to translate the ORF on the tmRNA; the nascent peptide is terminated with the 'tag peptide' encoded by the tmRNA and targeted for degradation. The ribosome is freed to recommence translation, which seems to be the essential function of trans-translation. The sequence is that of SsrA-binding protein from Ralstonia nicotianae (strain ATCC BAA-1114 / GMI1000) (Ralstonia solanacearum).